Here is a 298-residue protein sequence, read N- to C-terminus: Exosome complex component Rrp4 (298 aa).

In terms of domain architecture, S1 motif spans G63–K131. In terms of domain architecture, KH spans R139–I197. The disordered stretch occupies residues K276–R298. Residues Y285 to R298 are compositionally biased toward polar residues.

The protein belongs to the RRP4 family. In terms of assembly, component of the archaeal exosome complex. Forms a trimer of Rrp4 and/or Csl4 subunits. The trimer associates with a hexameric ring-like arrangement composed of 3 Rrp41-Rrp42 heterodimers.

It localises to the cytoplasm. Its function is as follows. Non-catalytic component of the exosome, which is a complex involved in RNA degradation. Increases the RNA binding and the efficiency of RNA degradation. Confers strong poly(A) specificity to the exosome. The protein is Exosome complex component Rrp4 of Methanobrevibacter smithii (strain ATCC 35061 / DSM 861 / OCM 144 / PS).